Here is a 174-residue protein sequence, read N- to C-terminus: Small ribosomal subunit protein uS5c (174 aa).

Positions 17–80 (WEERVVQVKR…TDAKKHLVTV (64 aa)) constitute an S5 DRBM domain.

It belongs to the universal ribosomal protein uS5 family. As to quaternary structure, part of the 30S ribosomal subunit. Contacts protein S4.

The protein localises to the plastid. Its subcellular location is the chloroplast. Its function is as follows. With S4 and S12 plays an important role in translational accuracy. The polypeptide is Small ribosomal subunit protein uS5c (rps5) (Porphyra purpurea (Red seaweed)).